A 409-amino-acid polypeptide reads, in one-letter code: Putative competence-damage inducible protein (409 aa).

The protein belongs to the CinA family.

This Clostridium botulinum (strain 657 / Type Ba4) protein is Putative competence-damage inducible protein.